Reading from the N-terminus, the 355-residue chain is Probable poly-beta-1,6-N-acetyl-D-glucosamine export protein (355 aa).

10 helical membrane-spanning segments follow: residues 13 to 30 (AFICVIIIVTHLLTQITL), 45 to 67 (YIRNIFIFGTPSFIILSQLLTTL), 74 to 96 (INYLFSRFKYIFIPYLLIGLFYS), 116 to 138 (VLGQWYGYFIIIIMQFFVLSYII), 145 to 167 (LFNSKILLLLAFIVQQSYLHYFL), 187 to 204 (MILGWIFYFFLGGYIGYN), 211 to 233 (FLEKYLIIVIMLTLGAYVLFIAV), 243 to 262 (SFTYTLTLYNSVMFFLLLGV), 269 to 291 (MLLNTIKAISAFSFFIYLLHPII), and 306 to 328 (TIVFLAISLLMILGICIGVGMML).

Belongs to the acyltransferase 3 family.

The protein localises to the cell membrane. Its function is as follows. Presumably involved in the export of the biofilm adhesin polysaccharide poly-beta-1,6-N-acetyl-D-glucosamine (PNAG, also referred to as PIA) across the cell membrane. The polypeptide is Probable poly-beta-1,6-N-acetyl-D-glucosamine export protein (icaC) (Staphylococcus epidermidis).